The chain runs to 57 residues: Insulin (57 aa).

Intrachain disulfides connect C12-C43, C24-C56, and C42-C47.

The protein belongs to the insulin family. Heterodimer of a B chain and an A chain linked by two disulfide bonds.

It is found in the secreted. Insulin decreases blood glucose concentration. It increases cell permeability to monosaccharides, amino acids and fatty acids. It accelerates glycolysis, the pentose phosphate cycle, and glycogen synthesis in liver. The sequence is that of Insulin (ins) from Lampetra fluviatilis (European river lamprey).